A 544-amino-acid polypeptide reads, in one-letter code: Chaperonin GroEL (544 aa).

Residues 30-33, Lys-51, 87-91, Gly-415, and Asp-496 each bind ATP; these read TLGP and DGTTT.

It belongs to the chaperonin (HSP60) family. As to quaternary structure, forms a cylinder of 14 subunits composed of two heptameric rings stacked back-to-back. Interacts with the co-chaperonin GroES.

The protein resides in the cytoplasm. It catalyses the reaction ATP + H2O + a folded polypeptide = ADP + phosphate + an unfolded polypeptide.. Functionally, together with its co-chaperonin GroES, plays an essential role in assisting protein folding. The GroEL-GroES system forms a nano-cage that allows encapsulation of the non-native substrate proteins and provides a physical environment optimized to promote and accelerate protein folding. This Granulibacter bethesdensis (strain ATCC BAA-1260 / CGDNIH1) protein is Chaperonin GroEL.